The following is a 423-amino-acid chain: Large ribosomal subunit protein mL37 (423 aa).

Residues 1 to 29 (MALASGPALRALAGSGRLGLGGYGTPKRG) constitute a mitochondrion transit peptide.

The protein belongs to the mitochondrion-specific ribosomal protein mL37 family. Component of the mitochondrial ribosome large subunit (39S) which comprises a 16S rRNA and about 50 distinct proteins.

It is found in the mitochondrion. The protein is Large ribosomal subunit protein mL37 (Mrpl37) of Mus musculus (Mouse).